A 123-amino-acid chain; its full sequence is Protein LLP homolog (123 aa).

The segment covering 1-21 (MAKSLRSKWKRKMRAEKRKKN) has biased composition (basic residues). Disordered regions lie at residues 1-22 (MAKS…KKNA) and 61-123 (DLDV…KLAW). Residues 70-89 (ESSKMDTELKRNKKNLRDQH) are compositionally biased toward basic and acidic residues. Basic residues predominate over residues 100-123 (QQKKLKSQCGKKKGKSKQAKKLAW).

Belongs to the learning-associated protein family.

Its subcellular location is the nucleus. The protein resides in the nucleolus. It localises to the chromosome. In terms of biological role, regulates dendritic and spine growth and synaptic transmission. The sequence is that of Protein LLP homolog (llph) from Xenopus laevis (African clawed frog).